Here is a 216-residue protein sequence, read N- to C-terminus: Refilin-B (216 aa).

The segment at 1–55 (MVGRLSLQDVPELVDTKKKGDGVLDSPDSGLPPSPSPSHWGLAATAGGGGERAPV) is disordered. Phosphoserine is present on residues Ser-6 and Ser-26.

Belongs to the Refilin family. In terms of assembly, interacts with FLNA and FLNB. In terms of tissue distribution, detected in various tissues, with highest expression in lung, followed by spleen.

Its subcellular location is the cytoplasm. The protein localises to the cytoskeleton. In terms of biological role, involved in the regulation of the perinuclear actin network and nuclear shape through interaction with filamins. Plays an essential role in the formation of cartilaginous skeletal elements. This chain is Refilin-B, found in Mus musculus (Mouse).